An 86-amino-acid chain; its full sequence is Large ribosomal subunit protein bL31B (86 aa).

This sequence belongs to the bacterial ribosomal protein bL31 family. Type B subfamily. In terms of assembly, part of the 50S ribosomal subunit.

This Ralstonia pickettii (strain 12J) protein is Large ribosomal subunit protein bL31B.